The sequence spans 335 residues: NADH-quinone oxidoreductase subunit H (335 aa).

The next 8 membrane-spanning stretches (helical) occupy residues 11-31 (VILT…AGAL), 81-101 (VIFT…FAII), 114-134 (IGLL…LFAG), 154-174 (VSYE…VGSF), 187-207 (LWFI…GVAV), 238-258 (FFVG…TLFF), 270-290 (QLSF…FILL), and 307-327 (WKFC…VVLW).

This sequence belongs to the complex I subunit 1 family. NDH-1 is composed of 13 different subunits. Subunits NuoA, H, J, K, L, M, N constitute the membrane sector of the complex.

The protein localises to the cell inner membrane. It carries out the reaction a quinone + NADH + 5 H(+)(in) = a quinol + NAD(+) + 4 H(+)(out). Its function is as follows. NDH-1 shuttles electrons from NADH, via FMN and iron-sulfur (Fe-S) centers, to quinones in the respiratory chain. The immediate electron acceptor for the enzyme in this species is believed to be ubiquinone. Couples the redox reaction to proton translocation (for every two electrons transferred, four hydrogen ions are translocated across the cytoplasmic membrane), and thus conserves the redox energy in a proton gradient. This subunit may bind ubiquinone. This Pseudomonas fluorescens (strain ATCC BAA-477 / NRRL B-23932 / Pf-5) protein is NADH-quinone oxidoreductase subunit H.